A 138-amino-acid chain; its full sequence is Bis(5'-nucleosyl)-tetraphosphatase [asymmetrical] (138 aa).

Residues 1–132 form the Nudix hydrolase domain; sequence MVVKAAGLVI…EMGSLLRKFS (132 aa). A Nudix box motif is present at residues 37–58; it reads GHVDPGEDEWQAAIRETKEEAN.

It belongs to the Nudix hydrolase family. Monomer. Mg(2+) serves as cofactor. It depends on Co(2+) as a cofactor. The cofactor is Mn(2+). Zn(2+) is required as a cofactor. Requires Ca(2+) as cofactor.

It carries out the reaction P(1),P(4)-bis(5'-adenosyl) tetraphosphate + H2O = AMP + ATP + 2 H(+). In terms of biological role, asymmetrically hydrolyzes Ap4A to yield AMP and ATP. In Caenorhabditis elegans, this protein is Bis(5'-nucleosyl)-tetraphosphatase [asymmetrical] (ndx-4).